Here is a 618-residue protein sequence, read N- to C-terminus: Transcriptional regulator CPUR_05421 (618 aa).

Residues 14–41 (CSHLVGREIGCSRDLAGCRRCTSEGRAC) constitute a DNA-binding region (zn(2)-C6 fungal-type). The segment at 52-87 (TRRRNRANQDVTRSALYSSNTTPQTISDQATGRPCE) is disordered. The segment covering 59–81 (NQDVTRSALYSSNTTPQTISDQA) has biased composition (polar residues).

Its subcellular location is the nucleus. Functionally, transcriptional regulator; part of the ergochrome gene cluster responsible for the typical purple-black color of the ergot sclerotia. The ergochrome gene cluster produces several ergot pigments including the yellow ergochrome secalonic acid and its derivatives, as well as the red anthraquinones endocrocin and clavorubin. The polypeptide is Transcriptional regulator CPUR_05421 (Claviceps purpurea (strain 20.1) (Ergot fungus)).